A 791-amino-acid chain; its full sequence is Ubiquitin carboxyl-terminal hydrolase 10-A (791 aa).

2 stretches are compositionally biased toward polar residues: residues 118–139 (FSESSIPDGSGNADSDGTSGTG) and 270–284 (DTTENLGVTNGQTLE). 2 disordered regions span residues 118–156 (FSESSIPDGSGNADSDGTSGTGQRERKKKKKRPPGYYSY) and 270–291 (DTTENLGVTNGQTLESPEEDTA). Positions 408–788 (RGLINKGNWC…TAYLLYYRRV (381 aa)) constitute a USP domain. Cys-417 (nucleophile) is an active-site residue. The disordered stretch occupies residues 560 to 580 (EVNKEEQEGSDEEWEQVGPRN). The Proton acceptor role is filled by His-742.

This sequence belongs to the peptidase C19 family. USP10 subfamily.

Its subcellular location is the cytoplasm. It localises to the nucleus. It catalyses the reaction Thiol-dependent hydrolysis of ester, thioester, amide, peptide and isopeptide bonds formed by the C-terminal Gly of ubiquitin (a 76-residue protein attached to proteins as an intracellular targeting signal).. Hydrolase that can remove conjugated ubiquitin from target proteins such as p53/tp53, rps2/us5, rps3/us3, rps10/eS10, becn1, snx3 and cftr. Acts as an essential regulator of p53/tp53 stability: in unstressed cells, specifically deubiquitinates p53/tp53 in the cytoplasm, leading to counteracts MDM2 action and stabilize p53/tp53. Following DNA damage, translocates to the nucleus and deubiquitinates p53/tp53, leading to regulate the p53/TP53-dependent DNA damage response. Component of a regulatory loop that controls autophagy and p53/tp53 levels. Plays a key role in 40S ribosome subunit recycling when a ribosome has stalled during translation: acts both by inhibiting formation of stress granules, which store stalled translation pre-initiation complexes, and mediating deubiquitination of 40S ribosome subunits. Deubiquitinates cftr in early endosomes, enhancing its endocytic recycling. The sequence is that of Ubiquitin carboxyl-terminal hydrolase 10-A (usp10-a) from Xenopus laevis (African clawed frog).